The primary structure comprises 83 residues: Defensin-like protein 47 (83 aa).

The first 27 residues, 1–27, serve as a signal peptide directing secretion; the sequence is MGSTKTLVTCFLVIILAVSLPNNNVLA. 4 cysteine pairs are disulfide-bonded: Cys40–Cys81, Cys44–Cys68, Cys53–Cys79, and Cys57–Cys80.

This sequence belongs to the DEFL family.

It is found in the secreted. This Arabidopsis thaliana (Mouse-ear cress) protein is Defensin-like protein 47.